The chain runs to 491 residues: Feruloyl-CoA synthase (491 aa).

Position 154 (threonine 154) interacts with Mg(2+). ATP contacts are provided by alanine 199, glycine 291, and threonine 295. Glutamate 296 is a Mg(2+) binding site. Residues aspartate 374 and lysine 391 each contribute to the ATP site.

The protein belongs to the ATP-dependent AMP-binding enzyme family. The cofactor is Mg(2+).

It carries out the reaction (E)-ferulate + ATP + CoA = (E)-feruloyl-CoA + AMP + diphosphate. Its function is as follows. Catalyzes the formation of (E)-feruloyl-CoA, AMP and diphosphate from (E)-ferulate, CoA and ATP. Involved in the degradation pathway of lignin-derived aromatic compounds of plant cell walls. Catalyzes the first enzymatic step in the conversion of ferulic acid into high value compound vanillin. The chain is Feruloyl-CoA synthase from Amycolatopsis sp.